We begin with the raw amino-acid sequence, 206 residues long: Small ribosomal subunit protein uS4 (206 aa).

The S4 RNA-binding domain occupies 96–158 (GRLDNVVYRM…AKQQSRIKAA (63 aa)).

Belongs to the universal ribosomal protein uS4 family. As to quaternary structure, part of the 30S ribosomal subunit. Contacts protein S5. The interaction surface between S4 and S5 is involved in control of translational fidelity.

One of the primary rRNA binding proteins, it binds directly to 16S rRNA where it nucleates assembly of the body of the 30S subunit. Functionally, with S5 and S12 plays an important role in translational accuracy. This Aliivibrio fischeri (strain ATCC 700601 / ES114) (Vibrio fischeri) protein is Small ribosomal subunit protein uS4.